Here is a 104-residue protein sequence, read N- to C-terminus: Large ribosomal subunit protein uL23 (104 aa).

Belongs to the universal ribosomal protein uL23 family. Part of the 50S ribosomal subunit. Contacts protein L29, and trigger factor when it is bound to the ribosome.

One of the early assembly proteins it binds 23S rRNA. One of the proteins that surrounds the polypeptide exit tunnel on the outside of the ribosome. Forms the main docking site for trigger factor binding to the ribosome. The sequence is that of Large ribosomal subunit protein uL23 from Ralstonia nicotianae (strain ATCC BAA-1114 / GMI1000) (Ralstonia solanacearum).